The primary structure comprises 102 residues: Small ribosomal subunit protein uS10 (102 aa).

It belongs to the universal ribosomal protein uS10 family. Part of the 30S ribosomal subunit.

Involved in the binding of tRNA to the ribosomes. This Rhizobium etli (strain CIAT 652) protein is Small ribosomal subunit protein uS10.